We begin with the raw amino-acid sequence, 181 residues long: MGRYAREPDNAGKSCKARGSNLRVHFKNTCETANAIRKMPLKRAVAYLKNVTAQKECVPFRRFNGGVGRCAQAKQFGTTQGRWPKKSAEFLLQLLRNAESNADYSGLDVDRLVVQHIQVNRAACLRRRTYRAHGRINPYMSSPCHIELWLTEAESVPEAAKKPGKKTSAVEKSKKATAATH.

Residues 157–181 (PEAAKKPGKKTSAVEKSKKATAATH) are disordered.

This sequence belongs to the universal ribosomal protein uL22 family.

This Biphyllus lunatus (Beetle) protein is Large ribosomal subunit protein uL22 (RpL17).